The following is a 1066-amino-acid chain: Pumilio homolog 2 (1066 aa).

An interaction with SNAPIN region spans residues M1–Q260. Residues S67, S70, S82, and S102 each carry the phosphoserine modification. Disordered stretches follow at residues K106–P203, T368–L408, and T490–L551. The segment covering R119–G133 has biased composition (basic and acidic residues). A phosphoserine mark is found at S136, S177, and S181. The residue at position 183 (T183) is a Phosphothreonine. The segment covering T368–Q383 has biased composition (low complexity). Over residues I394–E406 the composition is skewed to polar residues. At T395 the chain carries Phosphothreonine. Low complexity predominate over residues Q503 to P514. Positions S515–G525 are enriched in polar residues. A compositionally biased stretch (low complexity) spans S526–S540. Phosphoserine is present on residues S587 and S592. The interval S620–L650 is disordered. The span at T630–L650 shows a compositional bias: low complexity. Omega-N-methylarginine is present on R674. S684 and S700 each carry phosphoserine. Positions G706 to Y1048 constitute a PUM-HD domain. 8 Pumilio repeats span residues D726 to N761, E762 to T797, R798 to K835, E836 to D871, A872 to E907, E908 to S943, E944 to D979, and E980 to H1022. An adenine-nucleotide binding in RNA target region spans residues S741–Q745. The segment at N777–Q781 is uracil-nucleotide binding in RNA target. The tract at residues C813–Q817 is adenine-nucleotide binding in RNA target. A non-specific-nucleotide binding in RNA target region spans residues N851–Q855. An adenine-nucleotide binding in RNA target region spans residues C887–Q891. A uracil-nucleotide binding in RNA target region spans residues N923–Q927. Positions S959 to E963 are guanine-nucleotide binding in RNA target. The tract at residues N1002 to Q1006 is uracil-nucleotide binding in RNA target.

In terms of assembly, homodimer; homodimerizes in vitro. Interacts with DAZ1, DAZL and NANOS1 via its pumilio repeats. Interacts with NANOS3. Interacts with SNAPIN. Recruits the CCR4-POP2-NOT deadenylase leading to translational inhibition and mRNA degradation. Interacts with DDX20. In case of viral infection, interacts with DHX58. Widely expressed. Expressed in embryonic stem cells, heart, kidney, lung, skin, intestine, spleen and thymus. Expressed at intermediate level in brain and liver. Weakly or not expressed in muscles and stomach. Expressed at various stages of myeloid and lymphoid cell development. In the testis expressed in the spermatogoni, spermatocytes, spermatids and Sertoli cells.

It is found in the cytoplasm. Its subcellular location is the cytoplasmic granule. The protein localises to the perinuclear region. In terms of biological role, sequence-specific RNA-binding protein that acts as a post-transcriptional repressor by binding the 3'-UTR of mRNA targets. Binds to an RNA consensus sequence, the Pumilio Response Element (PRE), 5'-UGUANAUA-3', that is related to the Nanos Response Element (NRE). Mediates post-transcriptional repression of transcripts via different mechanisms: acts via direct recruitment of the CCR4-POP2-NOT deadenylase leading to translational inhibition and mRNA degradation. Also mediates deadenylation-independent repression by promoting accessibility of miRNAs. Acts as a post-transcriptional repressor of E2F3 mRNAs by binding to its 3'-UTR and facilitating miRNA regulation. Plays a role in cytoplasmic sensing of viral infection. Represses a program of genes necessary to maintain genomic stability such as key mitotic, DNA repair and DNA replication factors. Its ability to repress those target mRNAs is regulated by the lncRNA NORAD (non-coding RNA activated by DNA damage) which, due to its high abundance and multitude of PUMILIO binding sites, is able to sequester a significant fraction of PUM1 and PUM2 in the cytoplasm. May regulate DCUN1D3 mRNA levels. May support proliferation and self-renewal of stem cells. Binds specifically to miRNA MIR199A precursor, with PUM1, regulates miRNA MIR199A expression at a postranscriptional level. The sequence is that of Pumilio homolog 2 (Pum2) from Mus musculus (Mouse).